Reading from the N-terminus, the 968-residue chain is RNA polymerase-associated protein RapA (968 aa).

The Helicase ATP-binding domain occupies 163–332 (EVGRRFAPRV…FARLRLLDPD (170 aa)). 176 to 183 (DEVGLGKT) is an ATP binding site. Residues 278–281 (DEAH) carry the DEAH box motif. The region spanning 491–645 (RVDWLIDFLK…TCPSGHILFN (155 aa)) is the Helicase C-terminal domain.

Belongs to the SNF2/RAD54 helicase family. RapA subfamily. In terms of assembly, interacts with the RNAP. Has a higher affinity for the core RNAP than for the holoenzyme. Its ATPase activity is stimulated by binding to RNAP.

In terms of biological role, transcription regulator that activates transcription by stimulating RNA polymerase (RNAP) recycling in case of stress conditions such as supercoiled DNA or high salt concentrations. Probably acts by releasing the RNAP, when it is trapped or immobilized on tightly supercoiled DNA. Does not activate transcription on linear DNA. Probably not involved in DNA repair. The sequence is that of RNA polymerase-associated protein RapA from Shewanella woodyi (strain ATCC 51908 / MS32).